We begin with the raw amino-acid sequence, 434 residues long: UPF0597 protein CLI_2075 (434 aa).

The protein belongs to the UPF0597 family.

This chain is UPF0597 protein CLI_2075, found in Clostridium botulinum (strain Langeland / NCTC 10281 / Type F).